The following is a 195-amino-acid chain: Calcineurin B homologous protein 1 (195 aa).

Residue Gly-2 is the site of N-myristoyl glycine attachment. The Necessary for association with microtubule and interaction with GAPDH motif lies at 2–6; the sequence is GSRAS. 4 consecutive EF-hand domains span residues 26–61, 66–101, 110–145, and 151–186; these read SQITRLYSRFTSLDKGENGTLSREDFQRIPELAINP, IINAFFPEGEDQVNFRGFMRTLAHFRPIEDNEKSKD, SRSNKLHFAFRLYDLDKDEKISRDELLQVLRMMVGV, and QLGSIADRTIQEADQDGDSAISFTEFVKVLEKVDVE. Residues Asp-123, Asp-125, Asp-127, Lys-129, and Glu-134 each coordinate Ca(2+). Positions 138–147 match the Nuclear export signal 1 motif; the sequence is VLRMMVGVNI. The tract at residues 143 to 185 is necessary for nuclear export signal; that stretch reads VGVNISDEQLGSIADRTIQEADQDGDSAISFTEFVKVLEKVDV. Ca(2+)-binding residues include Asp-164, Asp-166, Asp-168, and Glu-175. Positions 176-185 match the Nuclear export signal 2 motif; sequence FVKVLEKVDV.

Belongs to the calcineurin regulatory subunit family. CHP subfamily. Monomer. Interacts with STK17B; the interaction occurs in a calcium-independent manner and induces the translocation of CHP1 from the Golgi to the nucleus. Interacts with GAPDH; the interaction is direct, occurs in a N-myristoylation-dependent manner and facilitates the ability of CHP1 to bind microtubules. Interacts with KIF1B (via the C-terminal end of the kinesin-motor domain); the interaction occurs in a calcium-dependent manner. Associates (via C-terminal domain) with microtubules; the association occurs with polymerized microtubules during the cell cycle in a myristoylation- and calcium-independent manner and is enhanced by GAPDH. Interacts with PPP3CA. Interacts with SLC9A1/NHE1 (via the C-terminal domain); the interaction occurs at the plasma membrane in a calcium-dependent manner and at a domain that is critical for growth factor stimulation of the exchanger. Interacts with SLC9A3; increases SLC9A3 trafficking and activity at the plasma membrane. In terms of processing, phosphorylated; decreased phosphorylation is associated with an increase in SLC9A1/NHE1 Na(+)/H(+) exchange activity. Phosphorylation occurs in serum-dependent manner. The phosphorylation state may regulate the binding to SLC9A1/NHE1. Both N-myristoylation and calcium-mediated conformational changes are essential for its function in exocytic traffic. N-myristoylation is required for its association with microtubules and interaction with GAPDH, but not for the constitutive association to membranes. Ubiquitously expressed. Has been found in fetal eye, lung, liver, muscle, heart, kidney, thymus and spleen.

The protein localises to the nucleus. It localises to the cytoplasm. It is found in the cytoskeleton. Its subcellular location is the endomembrane system. The protein resides in the endoplasmic reticulum-Golgi intermediate compartment. The protein localises to the endoplasmic reticulum. It localises to the cell membrane. It is found in the membrane. Calcium-binding protein involved in different processes such as regulation of vesicular trafficking, plasma membrane Na(+)/H(+) exchanger and gene transcription. Involved in the constitutive exocytic membrane traffic. Mediates the association between microtubules and membrane-bound organelles of the endoplasmic reticulum and Golgi apparatus and is also required for the targeting and fusion of transcytotic vesicles (TCV) with the plasma membrane. Functions as an integral cofactor in cell pH regulation by controlling plasma membrane-type Na(+)/H(+) exchange activity. Affects the pH sensitivity of SLC9A1/NHE1 by increasing its sensitivity at acidic pH. Required for the stabilization and localization of SLC9A1/NHE1 at the plasma membrane. Inhibits serum- and GTPase-stimulated Na(+)/H(+) exchange. Plays a role as an inhibitor of ribosomal RNA transcription by repressing the nucleolar UBF1 transcriptional activity. May sequester UBF1 in the nucleoplasm and limit its translocation to the nucleolus. Associates to the ribosomal gene promoter. Acts as a negative regulator of the calcineurin/NFAT signaling pathway. Inhibits NFAT nuclear translocation and transcriptional activity by suppressing the calcium-dependent calcineurin phosphatase activity. Also negatively regulates the kinase activity of the apoptosis-induced kinase STK17B. Inhibits both STK17B auto- and substrate-phosphorylations in a calcium-dependent manner. The protein is Calcineurin B homologous protein 1 (CHP1) of Homo sapiens (Human).